Here is a 557-residue protein sequence, read N- to C-terminus: Urocanate hydratase (557 aa).

NAD(+) is bound by residues 53–54, Gln131, 177–179, Glu197, Arg202, 243–244, 264–268, 274–275, and Tyr323; these read GG, GMG, NA, QTSAH, and YL. Residue Cys411 is part of the active site. Gly493 is a binding site for NAD(+).

This sequence belongs to the urocanase family. The cofactor is NAD(+).

The protein resides in the cytoplasm. The enzyme catalyses 4-imidazolone-5-propanoate = trans-urocanate + H2O. Its pathway is amino-acid degradation; L-histidine degradation into L-glutamate; N-formimidoyl-L-glutamate from L-histidine: step 2/3. Functionally, catalyzes the conversion of urocanate to 4-imidazolone-5-propionate. The polypeptide is Urocanate hydratase (Pseudomonas putida (strain ATCC 700007 / DSM 6899 / JCM 31910 / BCRC 17059 / LMG 24140 / F1)).